A 730-amino-acid polypeptide reads, in one-letter code: Synaptotagmin-like protein 5 (730 aa).

Residues 7-123 (FINLSFLLDH…IITGEWFFEE (117 aa)) form the RabBD domain. The FYVE-type zinc-finger motif lies at 64-106 (CVHCHRNLGLIFDRGDPCQACSLRVCRECRVAGPNGSWKCTVC). Residue serine 147 is modified to Phosphoserine. 3 disordered regions span residues 147 to 188 (SPGA…GFLL), 217 to 271 (QHFR…TRTV), and 294 to 355 (SQEL…LDKD). Composition is skewed to polar residues over residues 248 to 271 (PKSS…TRTV) and 305 to 322 (TSGT…SSDQ). 2 C2 domains span residues 406–527 (VSGE…DEWF) and 563–694 (PPEQ…VDWM).

Binds RAB27A that has been activated by GTP-binding, and possibly also RAB3A and RAB6A. Highly expressed in placenta and liver.

The protein resides in the membrane. Its function is as follows. May act as Rab effector protein and play a role in vesicle trafficking. Binds phospholipids. The sequence is that of Synaptotagmin-like protein 5 (SYTL5) from Homo sapiens (Human).